A 75-amino-acid chain; its full sequence is UPF0150 protein TM_1313 (75 aa).

This sequence belongs to the UPF0150 family.

This Thermotoga maritima (strain ATCC 43589 / DSM 3109 / JCM 10099 / NBRC 100826 / MSB8) protein is UPF0150 protein TM_1313.